The chain runs to 157 residues: Glutathione peroxidase (157 aa).

Residue cysteine 35 is part of the active site.

This sequence belongs to the glutathione peroxidase family.

The catalysed reaction is 2 glutathione + H2O2 = glutathione disulfide + 2 H2O. The polypeptide is Glutathione peroxidase (gpo) (Lactococcus lactis subsp. cremoris (strain MG1363)).